The sequence spans 356 residues: Phenylalanine--tRNA ligase alpha subunit (356 aa).

Position 258 (Glu258) interacts with Mg(2+).

The protein belongs to the class-II aminoacyl-tRNA synthetase family. Phe-tRNA synthetase alpha subunit type 1 subfamily. In terms of assembly, tetramer of two alpha and two beta subunits. Mg(2+) serves as cofactor.

Its subcellular location is the cytoplasm. It carries out the reaction tRNA(Phe) + L-phenylalanine + ATP = L-phenylalanyl-tRNA(Phe) + AMP + diphosphate + H(+). This is Phenylalanine--tRNA ligase alpha subunit from Macrococcus caseolyticus (strain JCSC5402) (Macrococcoides caseolyticum).